The chain runs to 214 residues: Type IV major pilin protein PilE1 (214 aa).

The propeptide at 1-7 is leader sequence; the sequence is MNTLQKG. The residue at position 8 (phenylalanine 8) is an N-methylphenylalanine. A helical transmembrane segment spans residues 8–28; sequence FTLIELMIVIAIVGILAAVAL. Residues cysteine 127 and cysteine 161 are joined by a disulfide bond. Residues 182–214 are disordered; the sequence is AGTDAVTADTTGKDKEIDTKHLPSTCRDKSSAE. Residues 192–214 show a composition bias toward basic and acidic residues; sequence TGKDKEIDTKHLPSTCRDKSSAE.

The protein belongs to the N-Me-Phe pilin family. The pili are polar flexible filaments of about 5.4 nanometers diameter and 2.5 micrometers average length; they consist of only a single polypeptide chain arranged in a helical configuration of five subunits per turn in the assembled pilus.

The protein resides in the fimbrium. It localises to the membrane. In terms of biological role, major component of the type IV pilus (T4P) that plays a role in cellular adherence, microcolony formation, resistance to neutrophil mediated killing, twitching motility as well as transformation. Mediates the attachment and the formation of bacterial microcolonies on host epithelial cells. Mechanistically, pili retractation induces host NF-kappa-B activation in infected cells, which is temporally associated with the formation of gonococcal microcolonies. The protein is Type IV major pilin protein PilE1 (pilE1) of Neisseria gonorrhoeae.